The sequence spans 115 residues: Non-specific lipid-transfer protein 3 (115 aa).

Positions 1-23 are cleaved as a signal peptide; that stretch reads MAFALRFFTCLVLTVCIVASVDA. Disulfide bonds link C27/C74, C37/C51, C52/C97, and C72/C111.

This sequence belongs to the plant LTP family.

In terms of biological role, plant non-specific lipid-transfer proteins transfer phospholipids as well as galactolipids across membranes. May play a role in wax or cutin deposition in the cell walls of expanding epidermal cells and certain secretory tissues. This chain is Non-specific lipid-transfer protein 3 (LTP3), found in Arabidopsis thaliana (Mouse-ear cress).